A 211-amino-acid chain; its full sequence is Small ribosomal subunit protein eS1 (211 aa).

Residues 192-211 (NGLPPYEAVGDRATPELASY) are disordered.

This sequence belongs to the eukaryotic ribosomal protein eS1 family.

The chain is Small ribosomal subunit protein eS1 from Methanopyrus kandleri (strain AV19 / DSM 6324 / JCM 9639 / NBRC 100938).